The following is a 358-amino-acid chain: MDDAAVLRKKGYIVGINLGKGSYAKVKSAYSERLKFNVAVKIIDRKKTPTDFVERFLPREMDILATVNHRSIIKTYEIFETSDGRIYIVMELGVQGDLLEFIKCRGALHEDVARKMFRQLSSAVKYCHDLDVVHRDLKCENLLLDKDFNIKLSDFGFSKRCLRDGSGRIVLSKTFCGSAAYAAPEVLQGIPYQPKVYDIWSLGVILYIMVCGSMPYDDSDIKKMLRIQKEHRVDFPRSKNLTGECKDLIYRILQPDVNRRLHIDEILSHSWLQPPKPKAMSSASFKREGEGKYRADCKLDTRPGSRPEHRPDHKLATKPQQRMLVTPENEDRMEDRLAETSRAKDHHISGAEVEKAST.

The Protein kinase domain occupies 12-272; that stretch reads YIVGINLGKG…IDEILSHSWL (261 aa). ATP is bound by residues 18–26 and Lys41; that span reads LGKGSYAKV. Residue Asp136 is the Proton acceptor of the active site. Composition is skewed to basic and acidic residues over residues 296–315 and 329–358; these read DCKLDTRPGSRPEHRPDHKL and NEDRMEDRLAETSRAKDHHISGAEVEKAST. The disordered stretch occupies residues 296–358; it reads DCKLDTRPGS…SGAEVEKAST (63 aa).

Belongs to the protein kinase superfamily. CAMK Ser/Thr protein kinase family. In terms of assembly, interacts with TSSK1B. Interacts with HSP90; this interaction stabilizes TSSK2. Mg(2+) serves as cofactor. Autophosphorylated. In terms of processing, ubiquitinated; HSP90 activity negatively regulates ubiquitination and degradation. Testis-specific. Expressed only in the spermatids postmeiotically at the final stages of cytodifferentiation in the seminiferous tubules (at protein level). Not detected in released sperms in the lumen of the seminiferous tubules. Also present in the epididymal sperm (at protein level).

The protein localises to the cytoplasm. It is found in the cytoskeleton. It localises to the microtubule organizing center. Its subcellular location is the centrosome. The protein resides in the centriole. The protein localises to the cytoplasmic vesicle. It is found in the secretory vesicle. It localises to the acrosome. The enzyme catalyses L-seryl-[protein] + ATP = O-phospho-L-seryl-[protein] + ADP + H(+). It catalyses the reaction L-threonyl-[protein] + ATP = O-phospho-L-threonyl-[protein] + ADP + H(+). Activated by phosphorylation on Thr-174, potentially by autophosphorylation. Functionally, testis-specific serine/threonine-protein kinase required during spermatid development. Phosphorylates 'Ser-281' of TSKS and SPAG16. Involved in the late stages of spermatogenesis, during the reconstruction of the cytoplasm. During spermatogenesis, required for the transformation of a ring-shaped structure around the base of the flagellum originating from the chromatoid body. In Mus musculus (Mouse), this protein is Testis-specific serine/threonine-protein kinase 2 (Tssk2).